The following is a 119-amino-acid chain: Beta-2-microglobulin (119 aa).

An N-terminal signal peptide occupies residues 1 to 20 (MAPFVAIALLVLLSLSGLEA). The Ig-like C1-type domain occupies 25–114 (PKIQVYSRHP…VTFSTPKTVK (90 aa)). C45 and C100 are disulfide-bonded.

Belongs to the beta-2-microglobulin family. Heterodimer of an alpha chain and a beta chain. Beta-2-microglobulin is the beta-chain of major histocompatibility complex class I molecules.

The protein resides in the secreted. Functionally, component of the class I major histocompatibility complex (MHC). Involved in the presentation of peptide antigens to the immune system. This Cheracebus torquatus (Collared titi monkey) protein is Beta-2-microglobulin (B2M).